The sequence spans 228 residues: PKHD-type hydroxylase YbiX (228 aa).

Positions 78-177 constitute a Fe2OG dioxygenase domain; the sequence is TLSTPLFNRY…RVASFIWIQS (100 aa). The Fe cation site is built by His96, Asp98, and His158. Arg168 is a binding site for 2-oxoglutarate.

It depends on Fe(2+) as a cofactor. L-ascorbate is required as a cofactor.

The protein is PKHD-type hydroxylase YbiX of Escherichia coli O157:H7.